Here is a 274-residue protein sequence, read N- to C-terminus: Transcription factor Ovo-like 2 (274 aa).

Residues 1–11 are compositionally biased toward basic residues; the sequence is MPKVFLVKRRS. The segment at 1–88 is disordered; that stretch reads MPKVFLVKRR…ETPELHDAQG (88 aa). The segment covering 18 to 29 has biased composition (basic and acidic residues); it reads SWDELPDDKRAD. Positions 50–74 are enriched in low complexity; that stretch reads DGGSSSGCSSSAGEPGGAESSSSPR. C2H2-type zinc fingers lie at residues 118-140, 146-168, 174-197, and 213-236; these read HNCD…LKCH, HLCT…VRTH, YKCE…KKIH, and YVCE…NSDH. Phosphoserine is present on serine 268.

The protein belongs to the krueppel C2H2-type zinc-finger protein family. As to quaternary structure, interacts (via zinc-finger domains) with CEBPA (via bZIP domain); the interaction inhibits the transcription factor activity of CEBPA and is required to repress adipogenesis. In terms of tissue distribution, expressed highly in testis, specifically in spermatocytes. Expressed also in skin and at lower levels in the ovary. Expressed in adipose tissues. Expression is lower than in testis and a relatively higher expression level is detected in the stromal vascular fraction (SVF) than in fat cells themselves.

It localises to the nucleus. Its function is as follows. Zinc-finger transcription repressor factor. Plays a critical role in maintaining the identity of epithelial lineages by suppressing epithelial-to mesenchymal transition (EMT) mainly through the repression of ZEB1, an EMT inducer. Positively regulates neuronal differentiation. Suppresses cell cycling and terminal differentiation of keratinocytes by directly repressing MYC and NOTCH1. Important for the correct development of primordial germ cells in embryos. Plays dual functions in thermogenesis and adipogenesis to maintain energy balance. Essential for brown/beige adipose tissue-mediated thermogenesis, is necessary for the development of brown adipocytes. In white adipose tissues, limits adipogenesis by blocking CEBPA binding to its transcriptional targets and inhibiting its transcription factor activity. This chain is Transcription factor Ovo-like 2, found in Mus musculus (Mouse).